The chain runs to 440 residues: Dynein axonemal assembly factor 11 (440 aa).

LRR repeat units lie at residues 20–43, 44–65, 66–89, and 90–110; these read IFSL…HKWC, RDLK…VGRL, KKLE…GCES, and LQKL…ETLK. An LRRCT domain is found at 128–146; the sequence is YQGYRQYVVATVPQLQSLD. The span at 178-192 shows a compositional bias: basic and acidic residues; the sequence is EEREKQKSNANEHPE. Disordered regions lie at residues 178–267 and 363–440; these read EERE…RTLI and PKKR…PPLM. Residues 193-211 are compositionally biased toward polar residues; that stretch reads INQSLSESQNGTQQYPESS. The segment covering 236-259 has biased composition (basic and acidic residues); sequence SRLEAHRHLEEKRRANEKEKEKPK. Residues 276-374 form the CS domain; the sequence is VNEPKLDFSL…KRTIRPTSVT (99 aa). Residues 369 to 378 show a composition bias toward polar residues; sequence RPTSVTSNQN. Basic and acidic residues-rich tracts occupy residues 379–392 and 420–431; these read NKKD…RELL and GLEERPVSKDFV.

This sequence belongs to the tilB family. As to quaternary structure, interacts with dvl2. Interacts with kur. In terms of tissue distribution, expressed in kinocilia of hair cells.

The protein resides in the cytoplasm. It is found in the dynein axonemal particle. Its subcellular location is the cell projection. It localises to the cilium. Functionally, plays a crucial role in regulating cilia motility in pronephric tubules, cloaca and neural tube. Required for establishing left-right asymmetry of the body plan; controls cell fate and convergent extension (CE) movements during gastrulation, respectively, via the Wnt and the planar cell polarity (PCP) signaling pathways. Required for the proper development of renal glomeruli and tubules. The sequence is that of Dynein axonemal assembly factor 11 (dnaaf11) from Danio rerio (Zebrafish).